The primary structure comprises 469 residues: Secreted triacylglycerol lipase LIP3 (469 aa).

A signal peptide spans 1–21 (MVSLLWKFTLLCLFLLACTSA). An intrachain disulfide couples Cys121 to Cys292. The active-site Nucleophile is Ser205. The N-linked (GlcNAc...) asparagine glycan is linked to Asn238. Catalysis depends on residues Asp352 and His386.

Belongs to the AB hydrolase superfamily. Lipase family. Class Lip subfamily.

It localises to the secreted. The catalysed reaction is a triacylglycerol + H2O = a diacylglycerol + a fatty acid + H(+). It carries out the reaction a monoacylglycerol + H2O = glycerol + a fatty acid + H(+). The enzyme catalyses a diacylglycerol + H2O = a monoacylglycerol + a fatty acid + H(+). Secreted lipase that hydrolyzes acylglycerol lipids such as triacylglycerols and consequently releases free fatty acid. Generates free oleic acid from the substrates mono- and diolein and hydrolyzes triolein in significant amounts. Due to an absence of fatty acid synthase genes in Malassezia species, secretory lipases are essential for the yeast to generate free fatty acids from degradation of sebum and assimilate them as lipid sources for growth. Plays an essential role at the pathogen-host interface during disease progression. Performs also the reverse reaction to build diacyl- and triacyl- glycerols from monoacylglycerols. In Malassezia restricta (strain ATCC 96810 / NBRC 103918 / CBS 7877) (Seborrheic dermatitis infection agent), this protein is Secreted triacylglycerol lipase LIP3.